A 727-amino-acid chain; its full sequence is Procollagen-lysine,2-oxoglutarate 5-dioxygenase 1 (727 aa).

The signal sequence occupies residues 1–18 (MRPLLLLAPLGWLLLAEA). Asparagine 163, asparagine 197, and asparagine 538 each carry an N-linked (GlcNAc...) asparagine glycan. The region spanning 636–727 (QFDLAFVVRY…RYIAVSFVDP (92 aa)) is the Fe2OG dioxygenase domain. Fe cation is bound by residues histidine 656 and aspartate 658. N-linked (GlcNAc...) asparagine glycosylation occurs at asparagine 686. Histidine 708 serves as a coordination point for Fe cation. Residue arginine 718 is part of the active site.

Homodimer. Identified in a complex with P3H3 and P3H4. The cofactor is Fe(2+). It depends on L-ascorbate as a cofactor.

It is found in the rough endoplasmic reticulum membrane. It catalyses the reaction L-lysyl-[collagen] + 2-oxoglutarate + O2 = (5R)-5-hydroxy-L-lysyl-[collagen] + succinate + CO2. Functionally, part of a complex composed of PLOD1, P3H3 and P3H4 that catalyzes hydroxylation of lysine residues in collagen alpha chains and is required for normal assembly and cross-linkling of collagen fibrils. Forms hydroxylysine residues in -Xaa-Lys-Gly- sequences in collagens. These hydroxylysines serve as sites of attachment for carbohydrate units and are essential for the stability of the intermolecular collagen cross-links. This is Procollagen-lysine,2-oxoglutarate 5-dioxygenase 1 (PLOD1) from Pongo abelii (Sumatran orangutan).